Consider the following 272-residue polypeptide: Ribosomal RNA small subunit methyltransferase A (272 aa).

Positions 16, 18, 43, 64, 89, and 110 each coordinate S-adenosyl-L-methionine.

It belongs to the class I-like SAM-binding methyltransferase superfamily. rRNA adenine N(6)-methyltransferase family. RsmA subfamily.

It is found in the cytoplasm. The enzyme catalyses adenosine(1518)/adenosine(1519) in 16S rRNA + 4 S-adenosyl-L-methionine = N(6)-dimethyladenosine(1518)/N(6)-dimethyladenosine(1519) in 16S rRNA + 4 S-adenosyl-L-homocysteine + 4 H(+). In terms of biological role, specifically dimethylates two adjacent adenosines (A1518 and A1519) in the loop of a conserved hairpin near the 3'-end of 16S rRNA in the 30S particle. May play a critical role in biogenesis of 30S subunits. The protein is Ribosomal RNA small subunit methyltransferase A of Pseudomonas fluorescens (strain Pf0-1).